The following is a 142-amino-acid chain: Membrane protein YneK (142 aa).

The helical transmembrane segment at 6–26 (FLWFILFWVIMMVVLLSIGGF) threads the bilayer.

Interacts with the N-terminal D1 domain of dynamin-like protein DynA.

Its subcellular location is the cell membrane. This chain is Membrane protein YneK (yneK), found in Bacillus subtilis (strain 168).